Reading from the N-terminus, the 320-residue chain is Phospho-N-acetylmuramoyl-pentapeptide-transferase (320 aa).

10 consecutive transmembrane segments (helical) span residues 6–26, 54–74, 81–101, 117–137, 145–165, 175–195, 200–220, 226–246, 251–271, and 300–320; these read FLTP…LFIG, MGGL…AIWL, LWIA…DDFI, LAGQ…EGFS, IGTI…LVGF, IDGL…IIAF, IDVA…LIFN, IFMG…MSIL, FSLL…MLQV, and RIDI…LLIF.

This sequence belongs to the glycosyltransferase 4 family. MraY subfamily. Requires Mg(2+) as cofactor.

It localises to the cell membrane. The enzyme catalyses UDP-N-acetyl-alpha-D-muramoyl-L-alanyl-gamma-D-glutamyl-L-lysyl-D-alanyl-D-alanine + di-trans,octa-cis-undecaprenyl phosphate = Mur2Ac(oyl-L-Ala-gamma-D-Glu-L-Lys-D-Ala-D-Ala)-di-trans,octa-cis-undecaprenyl diphosphate + UMP. The protein operates within cell wall biogenesis; peptidoglycan biosynthesis. Its function is as follows. Catalyzes the initial step of the lipid cycle reactions in the biosynthesis of the cell wall peptidoglycan: transfers peptidoglycan precursor phospho-MurNAc-pentapeptide from UDP-MurNAc-pentapeptide onto the lipid carrier undecaprenyl phosphate, yielding undecaprenyl-pyrophosphoryl-MurNAc-pentapeptide, known as lipid I. The sequence is that of Phospho-N-acetylmuramoyl-pentapeptide-transferase from Latilactobacillus sakei subsp. sakei (strain 23K) (Lactobacillus sakei subsp. sakei).